A 340-amino-acid polypeptide reads, in one-letter code: DnaJ homolog subfamily B member 1 (340 aa).

Residues 2 to 70 (GKDYYQTLGL…REIFDRYGEE (69 aa)) enclose the J domain. Threonine 307 is subject to Phosphothreonine.

Interacts with DNAJC3. Interacts with HSF1 (via transactivation domain); this interaction results in the inhibition of heat shock- and HSF1-induced transcriptional activity during the attenuation and recovery phase period of the heat shock response. Interacts with BAG3.

The protein localises to the cytoplasm. Its subcellular location is the nucleus. The protein resides in the nucleolus. Interacts with HSP70 and can stimulate its ATPase activity. Stimulates the association between HSC70 and HIP. Negatively regulates heat shock-induced HSF1 transcriptional activity during the attenuation and recovery phase period of the heat shock response. Stimulates ATP hydrolysis and the folding of unfolded proteins mediated by HSPA1A/B (in vitro). This Mus musculus (Mouse) protein is DnaJ homolog subfamily B member 1 (Dnajb1).